We begin with the raw amino-acid sequence, 203 residues long: ATP-dependent Clp protease proteolytic subunit 2 (203 aa).

Catalysis depends on serine 100, which acts as the Nucleophile. The active site involves histidine 125.

The protein belongs to the peptidase S14 family. In terms of assembly, fourteen ClpP subunits assemble into 2 heptameric rings which stack back to back to give a disk-like structure with a central cavity, resembling the structure of eukaryotic proteasomes.

It localises to the cytoplasm. The enzyme catalyses Hydrolysis of proteins to small peptides in the presence of ATP and magnesium. alpha-casein is the usual test substrate. In the absence of ATP, only oligopeptides shorter than five residues are hydrolyzed (such as succinyl-Leu-Tyr-|-NHMec, and Leu-Tyr-Leu-|-Tyr-Trp, in which cleavage of the -Tyr-|-Leu- and -Tyr-|-Trp bonds also occurs).. In terms of biological role, cleaves peptides in various proteins in a process that requires ATP hydrolysis. Has a chymotrypsin-like activity. Plays a major role in the degradation of misfolded proteins. The protein is ATP-dependent Clp protease proteolytic subunit 2 of Thermobifida fusca (strain YX).